The sequence spans 161 residues: Ribonuclease P protein component 2 (161 aa).

The protein belongs to the eukaryotic/archaeal RNase P protein component 2 family. Consists of a catalytic RNA component and at least 4-5 protein subunits.

It localises to the cytoplasm. It carries out the reaction Endonucleolytic cleavage of RNA, removing 5'-extranucleotides from tRNA precursor.. Functionally, part of ribonuclease P, a protein complex that generates mature tRNA molecules by cleaving their 5'-ends. The chain is Ribonuclease P protein component 2 from Haloarcula marismortui (strain ATCC 43049 / DSM 3752 / JCM 8966 / VKM B-1809) (Halobacterium marismortui).